We begin with the raw amino-acid sequence, 873 residues long: Protein translocase subunit SecA (873 aa).

Residues glutamine 88, 106 to 110 (GEGKT), and aspartate 501 contribute to the ATP site. Zn(2+) is bound by residues cysteine 856, cysteine 858, cysteine 867, and histidine 868.

The protein belongs to the SecA family. In terms of assembly, monomer and homodimer. Part of the essential Sec protein translocation apparatus which comprises SecA, SecYEG and auxiliary proteins SecDF-YajC and YidC. It depends on Zn(2+) as a cofactor.

The protein localises to the cell inner membrane. Its subcellular location is the cytoplasm. It carries out the reaction ATP + H2O + cellular proteinSide 1 = ADP + phosphate + cellular proteinSide 2.. Its function is as follows. Part of the Sec protein translocase complex. Interacts with the SecYEG preprotein conducting channel. Has a central role in coupling the hydrolysis of ATP to the transfer of proteins into and across the cell membrane, serving both as a receptor for the preprotein-SecB complex and as an ATP-driven molecular motor driving the stepwise translocation of polypeptide chains across the membrane. This is Protein translocase subunit SecA from Anaplasma phagocytophilum (strain HZ).